A 153-amino-acid polypeptide reads, in one-letter code: Proline-rich membrane anchor 1 (153 aa).

An N-terminal signal peptide occupies residues 1 to 35 (MLLRDLVPRHGCCWPSLLLHCALHPLWGLVQVTHA). The Extracellular portion of the chain corresponds to 36-92 (EPQKSCSKVTDSCQHICQCRPPPPLPPPPPPPPPPRLLSAPAPNSTSCPAEDSWWSG). In terms of domain architecture, PRAD spans 56 to 70 (PPPPLPPPPPPPPPP). The segment covering 59–71 (PLPPPPPPPPPPR) has biased composition (pro residues). The segment at 59–79 (PLPPPPPPPPPPRLLSAPAPN) is disordered. N79 carries N-linked (GlcNAc...) asparagine glycosylation. Residues 93–113 (LVIIVAVVCASLVFLTVLVII) form a helical membrane-spanning segment. At 114 to 153 (CYKAIKRKPLRKDENGTSVAEYPMSSSQSHKGVDVNAAVV) the chain is on the cytoplasmic side. Positions 129–153 (GTSVAEYPMSSSQSHKGVDVNAAVV) are disordered.

In terms of assembly, interacts with ACHE, probably through disulfide bonds. In terms of tissue distribution, predominantly expressed in the central nervous system, including in the brain. Also expressed in muscle, heart and kidney. Isoform 1 may be predominant in the cortex and striatum, while isoform 2 is more abundant in the cerebellum.

The protein localises to the cell membrane. Its subcellular location is the cell junction. It localises to the synapse. Its function is as follows. Required to anchor acetylcholinesterase (ACHE) to the basal lamina of the neuromuscular junction and to the membrane of neuronal synapses in brain. Also able to organize ACHE into tetramers. The polypeptide is Proline-rich membrane anchor 1 (Prima1) (Mus musculus (Mouse)).